A 65-amino-acid polypeptide reads, in one-letter code: EGSGGSGSSGNFTTGSNVRMSSVTNTSNAGTGTSAGDNSAGGNGSGNSNSAPAVTVTLTESLLNK.

The segment at 1 to 65 (EGSGGSGSSG…VTLTESLLNK (65 aa)) is disordered. Residues 18–28 (VRMSSVTNTSN) show a composition bias toward polar residues. Low complexity predominate over residues 29–38 (AGTGTSAGDN). A compositionally biased stretch (polar residues) spans 56 to 65 (VTLTESLLNK).

As to quaternary structure, forms a heterodimer with timeless (TIM); the complex then translocates into the nucleus. Phosphorylated with a circadian rhythmicity, probably by the double-time protein (dbt). Phosphorylation could be implicated in the stability of per monomer and in the formation of heterodimer per-tim.

Its subcellular location is the nucleus. It is found in the cytoplasm. It localises to the perinuclear region. Functionally, essential for biological clock functions. Determines the period length of circadian and ultradian rhythms; an increase in PER dosage leads to shortened circadian rhythms and a decrease leads to lengthened circadian rhythms. Essential for the circadian rhythmicity of locomotor activity, eclosion behavior, and for the rhythmic component of the male courtship song that originates in the thoracic nervous system. The biological cycle depends on the rhythmic formation and nuclear localization of the TIM-PER complex. Light induces the degradation of TIM, which promotes elimination of PER. Nuclear activity of the heterodimer coordinatively regulates PER and TIM transcription through a negative feedback loop. Behaves as a negative element in circadian transcriptional loop. Does not appear to bind DNA, suggesting indirect transcriptional inhibition. The polypeptide is Period circadian protein (per) (Drosophila mojavensis (Fruit fly)).